A 224-amino-acid chain; its full sequence is Metalloproteinase inhibitor 4 (224 aa).

An N-terminal signal peptide occupies residues 1-29 (MPQSPRPVPSWALLLRLLALLRPPGLGEA). Cysteine 30 is a Zn(2+) binding site. Involved in metalloproteinase-binding stretches follow at residues 30–33 (CSCA) and 99–100 (SS). Disulfide bonds link cysteine 30–cysteine 102, cysteine 32–cysteine 131, cysteine 42–cysteine 156, cysteine 158–cysteine 205, cysteine 163–cysteine 168, and cysteine 176–cysteine 197. Residues 30–156 (CSCAPAHPQQ…SLNHHYHLNC (127 aa)) form the NTR domain.

It belongs to the protease inhibitor I35 (TIMP) family.

Its subcellular location is the secreted. Its function is as follows. Complexes with metalloproteinases (such as collagenases) and irreversibly inactivates them by binding to their catalytic zinc cofactor. In Bos taurus (Bovine), this protein is Metalloproteinase inhibitor 4 (TIMP4).